The sequence spans 207 residues: Small ribosomal subunit protein uS4 (207 aa).

The segment at 30–54 (DKCKLDSKPGQHGRTSGARTSDYGN) is disordered. Positions 42–53 (GRTSGARTSDYG) are enriched in polar residues. Residues 97-160 (SRLDNVVYRM…KKQVRIAEAL (64 aa)) form the S4 RNA-binding domain.

The protein belongs to the universal ribosomal protein uS4 family. Part of the 30S ribosomal subunit. Contacts protein S5. The interaction surface between S4 and S5 is involved in control of translational fidelity.

Functionally, one of the primary rRNA binding proteins, it binds directly to 16S rRNA where it nucleates assembly of the body of the 30S subunit. In terms of biological role, with S5 and S12 plays an important role in translational accuracy. In Cupriavidus taiwanensis (strain DSM 17343 / BCRC 17206 / CCUG 44338 / CIP 107171 / LMG 19424 / R1) (Ralstonia taiwanensis (strain LMG 19424)), this protein is Small ribosomal subunit protein uS4.